A 218-amino-acid polypeptide reads, in one-letter code: Large ribosomal subunit protein bL25 (218 aa).

The interval 185-218 is disordered; sequence ARAAEEEAPAAEETTAEPELVRERREPRAEEEEE. Acidic residues predominate over residues 190–200; it reads EEAPAAEETTA. Basic and acidic residues predominate over residues 203 to 212; sequence ELVRERREPR.

This sequence belongs to the bacterial ribosomal protein bL25 family. CTC subfamily. As to quaternary structure, part of the 50S ribosomal subunit; part of the 5S rRNA/L5/L18/L25 subcomplex. Contacts the 5S rRNA. Binds to the 5S rRNA independently of L5 and L18.

In terms of biological role, this is one of the proteins that binds to the 5S RNA in the ribosome where it forms part of the central protuberance. The polypeptide is Large ribosomal subunit protein bL25 (Roseiflexus castenholzii (strain DSM 13941 / HLO8)).